Consider the following 84-residue polypeptide: MSVKIRLARRGAKKKPFYRIVAADVESPRDGKFLESVGTYDPMVEPAAIILNEERIRYWMGEGATPTTTVKSILKKQGFSSNPA.

It belongs to the bacterial ribosomal protein bS16 family.

The sequence is that of Small ribosomal subunit protein bS16 from Desulforapulum autotrophicum (strain ATCC 43914 / DSM 3382 / VKM B-1955 / HRM2) (Desulfobacterium autotrophicum).